Here is a 132-residue protein sequence, read N- to C-terminus: MWNEFKKFAFKGNVIDLAVGVVIGAAFGKIVSSLVKDIITPLLGMVLGGVDFTGLKITFGKASIMYGKFIQTIFDFLIIAAAIFMFVKVFNKLTSKREEEKEEELPEPTKEEELLGEIRDLLKQQNSSKDRA.

Helical transmembrane passes span 14 to 34, 38 to 58, and 69 to 89; these read VIDL…VSSL, IITP…LKIT, and FIQT…FVKV.

It belongs to the MscL family. In terms of assembly, homopentamer.

It localises to the cell membrane. Its function is as follows. Channel that opens in response to stretch forces in the membrane lipid bilayer. May participate in the regulation of osmotic pressure changes within the cell. This Bacillus thuringiensis (strain Al Hakam) protein is Large-conductance mechanosensitive channel.